The primary structure comprises 317 residues: Ribosomal protein L11 methyltransferase (317 aa).

Residues Thr-158, Gly-179, Asp-201, and Asn-244 each coordinate S-adenosyl-L-methionine.

This sequence belongs to the methyltransferase superfamily. PrmA family.

The protein resides in the cytoplasm. It carries out the reaction L-lysyl-[protein] + 3 S-adenosyl-L-methionine = N(6),N(6),N(6)-trimethyl-L-lysyl-[protein] + 3 S-adenosyl-L-homocysteine + 3 H(+). Methylates ribosomal protein L11. This is Ribosomal protein L11 methyltransferase from Lactococcus lactis subsp. cremoris (strain SK11).